Reading from the N-terminus, the 386-residue chain is 2-deoxy-scyllo-inosose synthase (386 aa).

NAD(+) is bound by residues Asp42, 73-76 (EVHK), 105-109 (GITGN), 129-130 (TT), 140-142 (SLK), and 151-152 (KN). Lys142 is an active-site residue. Glu184 is a Co(2+) binding site. Residue Glu244 is part of the active site. 2 residues coordinate Co(2+): His247 and His263.

Belongs to the sugar phosphate cyclases superfamily. DOI synthase family. NAD(+) is required as a cofactor. Requires Co(2+) as cofactor.

It catalyses the reaction D-glucose 6-phosphate = 2-deoxy-L-scyllo-inosose + phosphate. It functions in the pathway metabolic intermediate biosynthesis; 2-deoxystreptamine biosynthesis; 2-deoxystreptamine from D-glucose 6-phosphate: step 1/4. Its pathway is antibiotic biosynthesis; paromomycin biosynthesis. Functionally, catalyzes the intramolecular carbocycle formation from D-glucose-6-phosphate to 2-deoxy-scyllo-inosose (DOI). The chain is 2-deoxy-scyllo-inosose synthase (parC) from Streptomyces paromomycinus (Streptomyces rimosus subsp. paromomycinus).